Consider the following 385-residue polypeptide: ELAV-like protein 4 (385 aa).

Residues 12 to 48 (TMEPQVSNGPTSNTSNGPSSNNRNCPSPMQTGATTDD) form a disordered region. Residues 18 to 33 (SNGPTSNTSNGPSSNN) are compositionally biased toward low complexity. Polar residues predominate over residues 34-48 (RNCPSPMQTGATTDD). Residue Ser-38 is modified to Phosphoserine. RRM domains lie at 51–129 (TNLI…YARP) and 137–217 (ANLY…FANN). A Phosphoserine modification is found at Ser-233. Arg-248 is subject to Asymmetric dimethylarginine; by CARM1; alternate. Arg-248 carries the post-translational modification Omega-N-methylarginine; by CARM1; alternate. The 79-residue stretch at 302 to 380 (WCIFVYNLSP…RVLQVSFKTN (79 aa)) folds into the RRM 3 domain.

The protein belongs to the RRM elav family. In terms of assembly, component of a TAU mRNP complex, at least composed of IGF2BP1, ELAVL4 and G3BP. Associates with the EIF4F cap-binding complex, composed of EIF4G, EIF4A, EIF4E and PABP. Within the EIF4F cap-binding complex, interacts with EIF4A. Interacts with SMN (via Tudor domain) in an RNA-independent manner; the interaction is required for localization of ELAVL4 to RNA granules. Interacts with MAP1 light chain LC1 (via C-terminus); the interaction contributes to the association of ELAVL4 with microtubules. Interacts with MAP1 light chain LC2. In terms of processing, methylated by CARM1, which leads to reduced RNA-binding activity and enhanced interaction with SMN. Methylation at Arg-248 by CARM1 weakens protective binding to the 3'UTR of CDKN1A mRNA and down-regulates CDKN1A protein expression, thereby maintaining cells in a proliferative state. Methylation is inhibited by NGF, which facilitates neurite outgrowth. Expressed in pancreatic beta cells (at protein level). Expressed in the brain.

The protein localises to the cytoplasm. It localises to the perikaryon. Its subcellular location is the cell projection. The protein resides in the dendrite. It is found in the axon. The protein localises to the growth cone. Its function is as follows. RNA-binding protein that is involved in the post-transcriptional regulation of mRNAs. Plays a role in the regulation of mRNA stability, alternative splicing and translation. Binds to AU-rich element (ARE) sequences in the 3' untranslated region (UTR) of target mRNAs, including GAP43, VEGF, FOS, CDKN1A and ACHE mRNA. Many of the target mRNAs are coding for RNA-binding proteins, transcription factors and proteins involved in RNA processing and/or neuronal development and function. By binding to the mRNA 3'UTR, decreases mRNA deadenylation and thereby contributes to the stabilization of mRNA molecules and their protection from decay. Also binds to the polyadenylated (poly(A)) tail in the 3'UTR of mRNA, thereby increasing its affinity for mRNA binding. Mainly plays a role in neuron-specific RNA processing by stabilization of mRNAs such as GAP43, ACHE and mRNAs of other neuronal proteins, thereby contributing to the differentiation of neural progenitor cells, nervous system development, learning and memory mechanisms. Involved in the negative regulation of the proliferative activity of neuronal stem cells and in the positive regulation of neuronal differentiation of neural progenitor cells. Promotes neuronal differentiation of neural stem/progenitor cells in the adult subventricular zone of the hippocampus by binding to and stabilizing SATB1 mRNA. Binds and stabilizes MSI1 mRNA in neural stem cells. Exhibits increased binding to ACHE mRNA during neuronal differentiation, thereby stabilizing ACHE mRNA and enhancing its expression. Protects CDKN1A mRNA from decay by binding to its 3'-UTR. May bind to APP and BACE1 mRNAS and the BACE1AS lncRNA and enhance their stabilization. Plays a role in neurite outgrowth and in the establishment and maturation of dendritic arbors, thereby contributing to neocortical and hippocampal circuitry function. Stabilizes GAP43 mRNA and protects it from decay during postembryonic development in the brain. By promoting the stabilization of GAP43 mRNA, plays a role in NGF-mediated neurite outgrowth. Binds to BDNF long 3'UTR mRNA, thereby leading to its stabilization and increased dendritic translation after activation of PKC. By increasing translation of BDNF after nerve injury, may contribute to nerve regeneration. Acts as a stabilizing factor by binding to the 3'UTR of NOVA1 mRNA, thereby increasing its translation and enhancing its functional activity in neuron-specific splicing. Stimulates translation of mRNA in a poly(A)- and cap-dependent manner, possibly by associating with the EIF4F cap-binding complex. May also negatively regulate translation by binding to the 5'UTR of Ins2 mRNA, thereby repressing its translation. Upon glucose stimulation, Ins2 mRNA is released from ELAVL4 and translational inhibition is abolished. Also plays a role in the regulation of alternative splicing. May regulate alternative splicing of CALCA pre-mRNA into Calcitonin and Calcitonin gene-related peptide 1 (CGRP) by competing with splicing regulator TIAR for binding to U-rich intronic sequences of CALCA pre-mRNA. The polypeptide is ELAV-like protein 4 (ELAVL4) (Homo sapiens (Human)).